The primary structure comprises 372 residues: Protein phosphatase Mn(2+)-dependent 1K (372 aa).

The transit peptide at Met1 to Gln29 directs the protein to the mitochondrion. Residues Arg46–Trp61 form a critical for association with the BCKDH complex region. The region spanning Asn94–Phe346 is the PPM-type phosphatase domain. Positions 127 and 128 each coordinate Mn(2+). Ser248 is subject to Phosphoserine. Residues Asp298 and Asp337 each contribute to the Mn(2+) site.

This sequence belongs to the PP2C family. As to quaternary structure, interacts with E1 and E2 components of the branched-chain alpha-ketoacid dehydrogenase (BCKDH) complex. Interacts with both BCKDHA and BCKDHB chains of the E1 subunit. Interacts with the 24-meric DBT/E2 core of the BCKD complex with a 1:1 stoichiometry; the N-terminal region (residues 49-61) of PPM1K and C-terminal linker of the lipoyl domain of DBT/E2 (residues 145-160) are critical for this interaction whereas the lipoyl prosthetic group is dispensable. Competes with BCKDK for binding to DBT/E2; this interaction is modulated by branched-chain alpha-keto acids (BCKAs). At steady state, BCKDH holoenzyme preferentially binds BCKDK and BCKDHA/E1 is phosphorylated. In response to high levels of BCKAs, BCKDK is replaced by PPM1K leading to BCKDHA/E1 dephosphorylation. It depends on Mn(2+) as a cofactor.

It is found in the mitochondrion matrix. The enzyme catalyses O-phospho-L-seryl-[3-methyl-2-oxobutanoate dehydrogenase] + H2O = L-seryl-[3-methyl-2-oxobutanoate dehydrogenase] + phosphate. It carries out the reaction O-phospho-L-seryl-[protein] + H2O = L-seryl-[protein] + phosphate. Its pathway is protein modification. Functionally, serine/threonine-protein phosphatase component of macronutrients metabolism. Together with BCKDK serves as a metabolic regulatory node that coordinates branched-chain amino acids (BCAAs) and protein synthesis with glucose and lipid metabolism via two distinct phosphoprotein targets: BCKDHA/E1a subunit of the branched-chain alpha-ketoacid dehydrogenase (BCKDH) complex and ACLY, a lipogenic enzyme of Krebs cycle. At high levels of branched-chain ketoacids (BCKAs), dephosphorylates and activates mitochondrial BCKDH complex, a multisubunit complex consisting of three components, heterotetrameric E1 composed of BCKDHA and BCKDHB chains, 24-meric E2 core composed of DBT and homodimeric E3 composed of DLD, each involved in different steps of BCAA catabolism. Tightly associates with the E2 subunit of BCKDH complex and dephosphorylates Ser-333 of BCKDHA chain of the E1 subunit likely through on-off binding to individual E2 subunits of the 24-meric E2 core to increase the efficiency of the dephosphorylation reaction. Appears to dephosphorylate and inactivate cytosolic ACLY in response to changes of cellular carbohydrate abundance. Overnutrition and in particular high-fructose diet, activates MLXIPL/ChREBP leading to increased BCKDK to PPM1K ratio, phosphorylation of ACLY on Ser-454 and activation of its enzymatic activity that ultimately results in the generation of acetyl-CoA and malonyl-CoA immediate substrates of de novo lipogenesis. Recognizes phosphosites having SxS or RxxS motifs and strictly depends on Mn(2+) ions for the phosphatase activity. Regulates Ca(2+)-induced opening of mitochondrial transition pore and apoptotic cell death. The polypeptide is Protein phosphatase Mn(2+)-dependent 1K (Ppm1k) (Rattus norvegicus (Rat)).